The following is a 203-amino-acid chain: Putative GPI-anchored protein YHR214W (203 aa).

Positions 1 to 23 (MFNRFNKFQAAVALALLSRGALG) are cleaved as a signal peptide. N-linked (GlcNAc...) asparagine glycans are attached at residues Asn28 and Asn138. Residue Asn184 is the site of GPI-anchor amidated asparagine attachment. Residues 185 to 203 (AGTFSLSNAILNGGSVSGL) constitute a propeptide, removed in mature form.

The protein resides in the cell membrane. This Saccharomyces cerevisiae (strain ATCC 204508 / S288c) (Baker's yeast) protein is Putative GPI-anchored protein YHR214W.